Here is a 107-residue protein sequence, read N- to C-terminus: Large ribosomal subunit protein uL24 (107 aa).

Belongs to the universal ribosomal protein uL24 family. As to quaternary structure, part of the 50S ribosomal subunit.

In terms of biological role, one of two assembly initiator proteins, it binds directly to the 5'-end of the 23S rRNA, where it nucleates assembly of the 50S subunit. Its function is as follows. One of the proteins that surrounds the polypeptide exit tunnel on the outside of the subunit. This chain is Large ribosomal subunit protein uL24, found in Fervidobacterium nodosum (strain ATCC 35602 / DSM 5306 / Rt17-B1).